We begin with the raw amino-acid sequence, 102 residues long: UPF0328 protein ECU10_1820 (102 aa).

This sequence belongs to the UPF0328 family.

This is UPF0328 protein ECU10_1820 from Encephalitozoon cuniculi (strain GB-M1) (Microsporidian parasite).